The chain runs to 326 residues: NADH-specific methylglyoxal reductase (326 aa).

Residues 20-21 (TW) and Asp-54 each bind NAD(+). The active-site Proton donor is Tyr-59. NAD(+)-binding positions include Gln-189, 217 to 222 (YSPLEQ), Gly-291, and Gln-297.

The protein belongs to the aldo/keto reductase family. Aldo/keto reductase 11 subfamily. In terms of assembly, monomer.

The catalysed reaction is hydroxyacetone + NAD(+) = methylglyoxal + NADH + H(+). Catalyzes the NADH-dependent reduction of methylglyoxal (2-oxopropanal) in vitro. It is not known if this activity has physiological significance. Cannot use NADPH as a cosubstrate. Seems to play some role in intestinal colonization. The polypeptide is NADH-specific methylglyoxal reductase (ydjG) (Escherichia coli (strain K12)).